The primary structure comprises 447 residues: Argininosuccinate synthase (447 aa).

Residues 17–25 (AFSGGLDTS) and Ala43 contribute to the ATP site. L-citrulline is bound at residue Tyr99. Residues Gly129 and Thr131 each coordinate ATP. L-aspartate contacts are provided by Thr131, Asn135, and Asp136. Asn135 is a binding site for L-citrulline. An ATP-binding site is contributed by Asp136. L-citrulline is bound by residues Arg139 and Ser192. Residue Asp194 participates in ATP binding. L-citrulline-binding residues include Thr201, Glu203, and Glu280.

This sequence belongs to the argininosuccinate synthase family. Type 2 subfamily. Homotetramer.

It is found in the cytoplasm. The catalysed reaction is L-citrulline + L-aspartate + ATP = 2-(N(omega)-L-arginino)succinate + AMP + diphosphate + H(+). Its pathway is amino-acid biosynthesis; L-arginine biosynthesis; L-arginine from L-ornithine and carbamoyl phosphate: step 2/3. This is Argininosuccinate synthase from Paracidovorax citrulli (strain AAC00-1) (Acidovorax citrulli).